The chain runs to 105 residues: Phosphoribosyl-ATP pyrophosphatase (105 aa).

Belongs to the PRA-PH family.

The protein resides in the cytoplasm. The enzyme catalyses 1-(5-phospho-beta-D-ribosyl)-ATP + H2O = 1-(5-phospho-beta-D-ribosyl)-5'-AMP + diphosphate + H(+). It participates in amino-acid biosynthesis; L-histidine biosynthesis; L-histidine from 5-phospho-alpha-D-ribose 1-diphosphate: step 2/9. The chain is Phosphoribosyl-ATP pyrophosphatase from Ruthia magnifica subsp. Calyptogena magnifica.